A 266-amino-acid chain; its full sequence is Undecaprenyl-diphosphatase (266 aa).

8 helical membrane-spanning segments follow: residues 1-21 (MDTF…FLPI), 39-59 (QGLS…VIYF), 87-107 (WWII…KDFI), 111-131 (LRSA…LWWA), 149-169 (ALLI…RSGA), 183-203 (AAAR…AILV), 218-238 (ALTL…HYFL), and 246-266 (MTPF…FIFL).

This sequence belongs to the UppP family.

It localises to the cell inner membrane. It carries out the reaction di-trans,octa-cis-undecaprenyl diphosphate + H2O = di-trans,octa-cis-undecaprenyl phosphate + phosphate + H(+). Its function is as follows. Catalyzes the dephosphorylation of undecaprenyl diphosphate (UPP). Confers resistance to bacitracin. This chain is Undecaprenyl-diphosphatase, found in Shewanella putrefaciens (strain CN-32 / ATCC BAA-453).